A 183-amino-acid chain; its full sequence is Glutathione-regulated potassium-efflux system ancillary protein KefG (183 aa).

Belongs to the NAD(P)H dehydrogenase (quinone) family. KefG subfamily. In terms of assembly, interacts with KefB.

The protein resides in the cell inner membrane. The catalysed reaction is a quinone + NADH + H(+) = a quinol + NAD(+). It catalyses the reaction a quinone + NADPH + H(+) = a quinol + NADP(+). Functionally, regulatory subunit of a potassium efflux system that confers protection against electrophiles. Required for full activity of KefB. This is Glutathione-regulated potassium-efflux system ancillary protein KefG from Pectobacterium atrosepticum (strain SCRI 1043 / ATCC BAA-672) (Erwinia carotovora subsp. atroseptica).